A 117-amino-acid chain; its full sequence is Putative cysteine proteinase inhibitor 7 (117 aa).

The N-terminal stretch at 1–24 (MTMRTSSLLLAAVAVVAIVAGATA) is a signal peptide. The Cystatin domain maps to 28–84 (GSWEPVDINDPHVQELGRWAVAEEDRGVAAGGLTFERVTDGEKQVVAGVNYRLTLEA). Positions 71 to 75 (QVVAG) match the Secondary area of contact motif.

It belongs to the cystatin family. Phytocystatin subfamily.

It is found in the secreted. In terms of biological role, specific inhibitor of cysteine proteinases. Probably involved in the regulation of endogenous processes and in defense against pests and pathogens. In Oryza sativa subsp. japonica (Rice), this protein is Putative cysteine proteinase inhibitor 7.